Consider the following 297-residue polypeptide: PIH1 domain-containing protein 1 (297 aa).

The protein belongs to the PIH1 family.

The protein localises to the nucleus. In terms of biological role, involved in the assembly of C/D box small nucleolar ribonucleoprotein (snoRNP) particles. Recruits the SWI/SNF complex to the core promoter of rRNA genes and enhances pre-rRNA transcription. Mediates interaction of TELO2 with the R2TP complex which is necessary for the stability of MTOR and SMG1. Positively regulates the assembly and activity of the mTORC1 complex. This chain is PIH1 domain-containing protein 1 (pih1d1), found in Xenopus laevis (African clawed frog).